Consider the following 541-residue polypeptide: Chaperonin GroEL 2 (541 aa).

Residues 29-32 (TLGP), 86-90 (DGTTT), Gly413, 476-478 (NAA), and Asp492 contribute to the ATP site.

Belongs to the chaperonin (HSP60) family. As to quaternary structure, forms a cylinder of 14 subunits composed of two heptameric rings stacked back-to-back. Interacts with the co-chaperonin GroES.

It is found in the secreted. The protein resides in the capsule. The protein localises to the cell surface. It localises to the cell wall. The catalysed reaction is ATP + H2O + a folded polypeptide = ADP + phosphate + an unfolded polypeptide.. Its function is as follows. Together with its co-chaperonin GroES, plays an essential role in assisting protein folding. The GroEL-GroES system forms a nano-cage that allows encapsulation of the non-native substrate proteins and provides a physical environment optimized to promote and accelerate protein folding. The protein is Chaperonin GroEL 2 of Mycolicibacterium gilvum (strain PYR-GCK) (Mycobacterium gilvum (strain PYR-GCK)).